A 232-amino-acid polypeptide reads, in one-letter code: 5'-methylthioadenosine/S-adenosylhomocysteine nucleosidase (232 aa).

Catalysis depends on E12, which acts as the Proton acceptor. Substrate contacts are provided by residues G78, I152, and 173–174; that span reads ME. D197 acts as the Proton donor in catalysis.

Belongs to the PNP/UDP phosphorylase family. MtnN subfamily. As to quaternary structure, homodimer.

The enzyme catalyses S-adenosyl-L-homocysteine + H2O = S-(5-deoxy-D-ribos-5-yl)-L-homocysteine + adenine. It catalyses the reaction S-methyl-5'-thioadenosine + H2O = 5-(methylsulfanyl)-D-ribose + adenine. The catalysed reaction is 5'-deoxyadenosine + H2O = 5-deoxy-D-ribose + adenine. Its pathway is amino-acid biosynthesis; L-methionine biosynthesis via salvage pathway; S-methyl-5-thio-alpha-D-ribose 1-phosphate from S-methyl-5'-thioadenosine (hydrolase route): step 1/2. Functionally, catalyzes the irreversible cleavage of the glycosidic bond in both 5'-methylthioadenosine (MTA) and S-adenosylhomocysteine (SAH/AdoHcy) to adenine and the corresponding thioribose, 5'-methylthioribose and S-ribosylhomocysteine, respectively. Also cleaves 5'-deoxyadenosine, a toxic by-product of radical S-adenosylmethionine (SAM) enzymes, into 5-deoxyribose and adenine. Thus, is required for in vivo function of the radical SAM enzymes biotin synthase and lipoic acid synthase, that are inhibited by 5'-deoxyadenosine accumulation. This Salmonella paratyphi B (strain ATCC BAA-1250 / SPB7) protein is 5'-methylthioadenosine/S-adenosylhomocysteine nucleosidase.